A 461-amino-acid chain; its full sequence is Glycerol-3-phosphate acyltransferase, chloroplastic (461 aa).

The N-terminal 96 residues, M1–S96, are a transit peptide targeting the chloroplast. Over residues L47–P76 the composition is skewed to low complexity. The disordered stretch occupies residues L47–P88. Residues H231–D236 carry the HXXXXD motif motif.

This sequence belongs to the GPAT/DAPAT family.

It localises to the plastid. Its subcellular location is the chloroplast stroma. It catalyses the reaction sn-glycerol 3-phosphate + an acyl-CoA = a 1-acyl-sn-glycero-3-phosphate + CoA. Its pathway is phospholipid metabolism; CDP-diacylglycerol biosynthesis; CDP-diacylglycerol from sn-glycerol 3-phosphate: step 1/3. Its function is as follows. Esterifies acyl-group from acyl-ACP to the sn-1 position of glycerol-3-phosphate. The enzyme from chilling-resistant plants discriminates against non-fluid palmitic acid and selects oleic acid whereas the enzyme from sensitive plants accepts both fatty acids. The protein is Glycerol-3-phosphate acyltransferase, chloroplastic (PLSB) of Phaseolus vulgaris (Kidney bean).